A 247-amino-acid polypeptide reads, in one-letter code: tRNA pseudouridine synthase A (247 aa).

Aspartate 53 serves as the catalytic Nucleophile. Residue tyrosine 111 participates in substrate binding.

Belongs to the tRNA pseudouridine synthase TruA family. Homodimer.

The catalysed reaction is uridine(38/39/40) in tRNA = pseudouridine(38/39/40) in tRNA. Its function is as follows. Formation of pseudouridine at positions 38, 39 and 40 in the anticodon stem and loop of transfer RNAs. The sequence is that of tRNA pseudouridine synthase A from Bacillus licheniformis (strain ATCC 14580 / DSM 13 / JCM 2505 / CCUG 7422 / NBRC 12200 / NCIMB 9375 / NCTC 10341 / NRRL NRS-1264 / Gibson 46).